A 210-amino-acid chain; its full sequence is Lysine N-acyltransferase MbtK (210 aa).

His-130 is a binding site for substrate. The active-site Proton acceptor is the Asp-168.

It belongs to the lysine N-acyltransferase MbtK family. As to quaternary structure, monomer.

It participates in siderophore biosynthesis; mycobactin biosynthesis. Functionally, acyltransferase required for the direct transfer of medium- to long-chain fatty acyl moieties from a carrier protein (MbtL) on to the epsilon-amino group of lysine residue in the mycobactin core. The chain is Lysine N-acyltransferase MbtK (mbtK) from Mycobacterium tuberculosis (strain CDC 1551 / Oshkosh).